The following is a 59-amino-acid chain: Large ribosomal subunit protein uL30 (59 aa).

Belongs to the universal ribosomal protein uL30 family. Part of the 50S ribosomal subunit.

This is Large ribosomal subunit protein uL30 from Clostridium botulinum (strain ATCC 19397 / Type A).